The primary structure comprises 188 residues: Insulin-like peptide INSL6 (188 aa).

A signal peptide spans 1–22; the sequence is MKQLCCSCLLWLGLLLAPFSQE. 3 disulfide bridges follow: C33-C169, C45-C182, and C168-C173. A propeptide spans 53-158 (connecting peptide); that stretch reads FSMEEQSPMT…SGLFWGNHPQ (106 aa).

This sequence belongs to the insulin family. In terms of tissue distribution, testis and prostate specific.

Its subcellular location is the secreted. May have a role in sperm development and fertilization. The polypeptide is Insulin-like peptide INSL6 (Insl6) (Rattus norvegicus (Rat)).